A 1948-amino-acid polypeptide reads, in one-letter code: Receptor-type tyrosine-protein phosphatase S (1948 aa).

The N-terminal stretch at 1–29 is a signal peptide; that stretch reads MAPTWGPGMVSVVGPMGLLVVLLVGGCAA. The Extracellular segment spans residues 30-1282; sequence EEPPRFIKEP…PQPIVDGEEG (1253 aa). Ig-like C2-type domains lie at 33 to 123, 135 to 233, and 245 to 327; these read PRFI…AKLT, PNID…ANLY, and PRFS…AQIT. 2 cysteine pairs are disulfide-bonded: cysteine 54–cysteine 107 and cysteine 156–cysteine 216. The interval 68 to 72 is important for binding to glycosaminoglycan chains; the sequence is KKGKK. 2 N-linked (GlcNAc...) asparagine glycosylation sites follow: asparagine 263 and asparagine 308. Cysteine 266 and cysteine 311 are joined by a disulfide. 8 consecutive Fibronectin type-III domains span residues 334-424, 429-523, 527-616, 621-718, 723-831, 832-930, 931-1033, and 1036-1120; these read APGT…TGEQ, APRN…TQQG, QPMN…TLQS, PPQD…TDED, PPRK…TKGA, VLGR…TPRG, HPQI…FLRD, and SPKN…TAFN. Residues 700–724 are disordered; it reads TEVGPGPESSPVVVRTDEDVPSAPP. Residues 701–713 are compositionally biased toward low complexity; that stretch reads EVGPGPESSPVVV. The N-linked (GlcNAc...) asparagine glycan is linked to asparagine 733. Asparagine 940 carries N-linked (GlcNAc...) asparagine glycosylation. The chain crosses the membrane as a helical span at residues 1283–1303; the sequence is LIWVIGPVLAVVFIICIVIAI. The Cytoplasmic segment spans residues 1304 to 1948; the sequence is LLYKNKPDSK…YLGSFDHYAT (645 aa). Basic and acidic residues-rich tracts occupy residues 1311 to 1321 and 1331 to 1340; these read DSKRKDSEPRT and APHHPKDPVE. The disordered stretch occupies residues 1311–1340; that stretch reads DSKRKDSEPRTKCLLNNADLAPHHPKDPVE. 2 consecutive Tyrosine-protein phosphatase domains span residues 1393 to 1648 and 1680 to 1939; these read LSQE…LLEA and MELE…ALEY. Substrate contacts are provided by residues aspartate 1557, 1589-1595, and glutamine 1633; that span reads CSAGVGR. Catalysis depends on cysteine 1589, which acts as the Phosphocysteine intermediate. The active-site Phosphocysteine intermediate is cysteine 1880.

Belongs to the protein-tyrosine phosphatase family. Receptor class 2A subfamily. In terms of assembly, binding to large heparan sulfate proteoglycan structures promotes oligomerization. Binding to chondroitin sulfate proteoglycan does not lead to oligomerization. Interacts (via Ig-like domains) with NTRK3. Interacts (via Ig-like domains) with NTRK1, but does not form detectable complexes with NTRK2. Interacts with PPFIA1, PPFIA2 and PPFIA3. In terms of processing, a cleavage occurs, separating the extracellular domain from the transmembrane segment. This process called 'ectodomain shedding' is thought to be involved in receptor desensitization, signal transduction and/or membrane localization. Detected in peripheral blood plasmacytoid dendritic cells (at protein level). Detected in all tissues tested except for placenta and liver. Detected in peripheral blood plasmacytoid dendritic cells.

It is found in the cell membrane. Its subcellular location is the cell projection. It localises to the axon. The protein localises to the perikaryon. The protein resides in the cytoplasmic vesicle. It is found in the secretory vesicle. Its subcellular location is the synaptic vesicle membrane. It localises to the synapse. The protein localises to the synaptosome. The protein resides in the postsynaptic density. It is found in the neuron projection. Its subcellular location is the growth cone. The catalysed reaction is O-phospho-L-tyrosyl-[protein] + H2O = L-tyrosyl-[protein] + phosphate. Its function is as follows. Cell surface receptor that binds to glycosaminoglycans, including chondroitin sulfate proteoglycans and heparan sulfate proteoglycan. Binding to chondroitin sulfate and heparan sulfate proteoglycans has opposite effects on PTPRS oligomerization and regulation of neurite outgrowth. Contributes to the inhibition of neurite and axonal outgrowth by chondroitin sulfate proteoglycans, also after nerve transection. Plays a role in stimulating neurite outgrowth in response to the heparan sulfate proteoglycan GPC2. Required for normal brain development, especially for normal development of the pituitary gland and the olfactory bulb. Functions as a tyrosine phosphatase. Mediates dephosphorylation of NTRK1, NTRK2 and NTRK3. Plays a role in down-regulation of signaling cascades that lead to the activation of Akt and MAP kinases. Down-regulates TLR9-mediated activation of NF-kappa-B, as well as production of TNF, interferon alpha and interferon beta. In Homo sapiens (Human), this protein is Receptor-type tyrosine-protein phosphatase S (PTPRS).